A 739-amino-acid polypeptide reads, in one-letter code: DNA ligase (739 aa).

34–38 lines the NAD(+) pocket; that stretch reads DADYD. The segment covering 49-59 has biased composition (basic and acidic residues); the sequence is ARFPHLKRPDS. A disordered region spans residues 49–70; it reads ARFPHLKRPDSPSEQVGARPGE. Residues 83-84 and E117 contribute to the NAD(+) site; that span reads SL. K119 acts as the N6-AMP-lysine intermediate in catalysis. Positions 140, 175, 291, and 315 each coordinate NAD(+). Residues C420, C423, C438, and C444 each coordinate Zn(2+). The 80-residue stretch at 660–739 folds into the BRCT domain; the sequence is ARDSPVAGKT…DGWLKLIEGL (80 aa).

It belongs to the NAD-dependent DNA ligase family. LigA subfamily. It depends on Mg(2+) as a cofactor. Mn(2+) is required as a cofactor.

It catalyses the reaction NAD(+) + (deoxyribonucleotide)n-3'-hydroxyl + 5'-phospho-(deoxyribonucleotide)m = (deoxyribonucleotide)n+m + AMP + beta-nicotinamide D-nucleotide.. DNA ligase that catalyzes the formation of phosphodiester linkages between 5'-phosphoryl and 3'-hydroxyl groups in double-stranded DNA using NAD as a coenzyme and as the energy source for the reaction. It is essential for DNA replication and repair of damaged DNA. The chain is DNA ligase from Ruegeria pomeroyi (strain ATCC 700808 / DSM 15171 / DSS-3) (Silicibacter pomeroyi).